Here is a 370-residue protein sequence, read N- to C-terminus: uncharacterized protein (370 aa).

Transmembrane regions (helical) follow at residues 11–31 and 104–124; these read LFIFLCCIMSITILSFSLVFP and IITSMTLTSLIAKVFPIPILI. Residues 145 to 197 are disordered; it reads HHNNNNNNNNNNNNNNNNNNNNNNNNNNNNNNNNNNNNQNNNNNDNNDNNDVL. Residues 147-194 are compositionally biased toward low complexity; the sequence is NNNNNNNNNNNNNNNNNNNNNNNNNNNNNNNNNNNNQNNNNNDNNDNN. The next 2 membrane-spanning stretches (helical) occupy residues 227 to 247 and 310 to 330; these read ITQLVVNGVSFMITLFSTFVV and LSLCSLCLDSFSIIVIIFLII.

The protein localises to the membrane. This is an uncharacterized protein from Dictyostelium discoideum (Social amoeba).